The primary structure comprises 396 residues: Putative T-box protein 39 (396 aa).

Residues 11-192 (MAEEDRWKQW…KNSTYGNRLD (182 aa)) constitute a DNA-binding region (T-box). A disordered region spans residues 185–215 (STYGNRLDGGNKRKNTDSSEERTSKRSKNET). Positions 193-215 (GGNKRKNTDSSEERTSKRSKNET) are enriched in basic and acidic residues.

The protein localises to the nucleus. This chain is Putative T-box protein 39 (tbx-39), found in Caenorhabditis elegans.